The following is a 300-amino-acid chain: UDP-N-acetylenolpyruvoylglucosamine reductase (300 aa).

An FAD-binding PCMH-type domain is found at 29 to 193 (TGGPADLLVF…LSATFKLRSG (165 aa)). R172 is a catalytic residue. The active-site Proton donor is the S222. E292 is an active-site residue.

The protein belongs to the MurB family. It depends on FAD as a cofactor.

It is found in the cytoplasm. The enzyme catalyses UDP-N-acetyl-alpha-D-muramate + NADP(+) = UDP-N-acetyl-3-O-(1-carboxyvinyl)-alpha-D-glucosamine + NADPH + H(+). It functions in the pathway cell wall biogenesis; peptidoglycan biosynthesis. Its function is as follows. Cell wall formation. The chain is UDP-N-acetylenolpyruvoylglucosamine reductase from Pediococcus pentosaceus (strain ATCC 25745 / CCUG 21536 / LMG 10740 / 183-1w).